Here is a 528-residue protein sequence, read N- to C-terminus: UDP-glucuronosyltransferase 2A2 (528 aa).

The N-terminal stretch at 1 to 21 (MIKKVLQLLIFHLTLAEIVLS) is a signal peptide. At 22–494 (GNVVVWPTDG…FQYHSLDVIG (473 aa)) the chain is on the extracellular side. N-linked (GlcNAc...) asparagine glycosylation is found at Asn48 and Asn314. A helical membrane pass occupies residues 495–515 (FLLACVASAILLVAKCCLFIF). Over 516–528 (QKVGKTGKKKKRD) the chain is Cytoplasmic.

Belongs to the UDP-glycosyltransferase family.

It localises to the membrane. The enzyme catalyses glucuronate acceptor + UDP-alpha-D-glucuronate = acceptor beta-D-glucuronoside + UDP + H(+). It carries out the reaction 17alpha-estradiol + UDP-alpha-D-glucuronate = 17alpha-estradiol 3-O-(beta-D-glucuronate) + UDP + H(+). It catalyses the reaction 17beta-estradiol + UDP-alpha-D-glucuronate = 17beta-estradiol 3-O-(beta-D-glucuronate) + UDP + H(+). The catalysed reaction is chenodeoxycholate + UDP-alpha-D-glucuronate = chenodeoxycholoyl-24-O-(beta-D-glucuronate) + UDP. The enzyme catalyses lithocholate + UDP-alpha-D-glucuronate = lithocholoyl-24-O-(beta-D-glucuronate) + UDP. It carries out the reaction deoxycholate + UDP-alpha-D-glucuronate = deoxycholoyl-24-O-(beta-D-glucuronate) + UDP. It catalyses the reaction hyocholate + UDP-alpha-D-glucuronate = hyocholoyl-24-O-(beta-D-glucuronate) + UDP. The catalysed reaction is hyodeoxycholate + UDP-alpha-D-glucuronate = hyodeoxycholate 6-O-(beta-D-glucuronate) + UDP + H(+). UDP-glucuronosyltransferase (UGT) that catalyzes phase II biotransformation reactions in which lipophilic substrates are conjugated with glucuronic acid to increase the metabolite's water solubility, thereby facilitating excretion into either the urine or bile. Essential for the elimination and detoxification of drugs, xenobiotics and endogenous compounds. Catalyzes the glucuronidation of endogenous estrogen hormone estradiol. Contributes to bile acid (BA) detoxification by catalyzing the glucuronidation of BA substrates, which are natural detergents for dietary lipids absorption. Potential role in detoxification of toxic waste compounds in the amniotic fluid before birth, and air-born chemical after birth. The protein is UDP-glucuronosyltransferase 2A2 of Mus musculus (Mouse).